Consider the following 61-residue polypeptide: Weak toxin CM-2a (61 aa).

Disulfide bonds link Cys-3–Cys-19, Cys-12–Cys-37, Cys-41–Cys-49, and Cys-50–Cys-55.

The protein belongs to the three-finger toxin family. Short-chain subfamily. Orphan group XX sub-subfamily. As to expression, expressed by the venom gland.

It localises to the secreted. This chain is Weak toxin CM-2a, found in Naja annulifera (Banded Egyptian cobra).